The following is a 122-amino-acid chain: Large ribosomal subunit protein uL14 (122 aa).

It belongs to the universal ribosomal protein uL14 family. As to quaternary structure, part of the 50S ribosomal subunit. Forms a cluster with proteins L3 and L19. In the 70S ribosome, L14 and L19 interact and together make contacts with the 16S rRNA in bridges B5 and B8.

Binds to 23S rRNA. Forms part of two intersubunit bridges in the 70S ribosome. This chain is Large ribosomal subunit protein uL14, found in Sulfurimonas denitrificans (strain ATCC 33889 / DSM 1251) (Thiomicrospira denitrificans (strain ATCC 33889 / DSM 1251)).